The following is a 430-amino-acid chain: Serine--tRNA ligase (430 aa).

235–237 (TSE) contacts L-serine. 266–268 (RSE) serves as a coordination point for ATP. Glu-289 lines the L-serine pocket. 353 to 356 (EISS) provides a ligand contact to ATP. Position 388 (Ser-388) interacts with L-serine.

It belongs to the class-II aminoacyl-tRNA synthetase family. Type-1 seryl-tRNA synthetase subfamily. In terms of assembly, homodimer. The tRNA molecule binds across the dimer.

It is found in the cytoplasm. It catalyses the reaction tRNA(Ser) + L-serine + ATP = L-seryl-tRNA(Ser) + AMP + diphosphate + H(+). The enzyme catalyses tRNA(Sec) + L-serine + ATP = L-seryl-tRNA(Sec) + AMP + diphosphate + H(+). Its pathway is aminoacyl-tRNA biosynthesis; selenocysteinyl-tRNA(Sec) biosynthesis; L-seryl-tRNA(Sec) from L-serine and tRNA(Sec): step 1/1. Functionally, catalyzes the attachment of serine to tRNA(Ser). Is also able to aminoacylate tRNA(Sec) with serine, to form the misacylated tRNA L-seryl-tRNA(Sec), which will be further converted into selenocysteinyl-tRNA(Sec). The chain is Serine--tRNA ligase from Azoarcus sp. (strain BH72).